A 264-amino-acid polypeptide reads, in one-letter code: L-aspartate dehydrogenase (264 aa).

2 residues coordinate NAD(+): alanine 120 and asparagine 186. Histidine 216 is a catalytic residue.

The protein belongs to the L-aspartate dehydrogenase family.

The catalysed reaction is L-aspartate + NADP(+) + H2O = oxaloacetate + NH4(+) + NADPH + H(+). The enzyme catalyses L-aspartate + NAD(+) + H2O = oxaloacetate + NH4(+) + NADH + H(+). The protein operates within cofactor biosynthesis; NAD(+) biosynthesis; iminoaspartate from L-aspartate (dehydrogenase route): step 1/1. In terms of biological role, specifically catalyzes the NAD or NADP-dependent dehydrogenation of L-aspartate to iminoaspartate. The polypeptide is L-aspartate dehydrogenase (Serratia proteamaculans (strain 568)).